A 610-amino-acid polypeptide reads, in one-letter code: Oxidoreductase ptaE (610 aa).

A signal peptide spans 1–20 (MFQSILFLAFYGRPVFGSAA). 2 consecutive Plastocyanin-like domains span residues 67-181 (QIIS…HGPS) and 191-344 (PWLL…IVRY). Residues N105, N111, N262, N277, N330, N356, N401, N409, N427, and N602 are each glycosylated (N-linked (GlcNAc...) asparagine). One can recognise a Plastocyanin-like 3 domain in the interval 425–568 (YVNWSEPSVK…IAIQFLEQPS (144 aa)).

The protein belongs to the multicopper oxidase family.

Its pathway is secondary metabolite biosynthesis. Oxidoreductase; part of the gene cluster that mediates the biosynthesis of pestheic acid, a diphenyl ether which is a biosynthetic precursor of the unique chloropupukeananes. The biosynthesis initiates from condensation of acetate and malonate units catalyzed by the non-reducing PKS ptaA. As the ptaA protein is TE/CLC domain-deficient, hydrolysis and Claisen cyclization of the polyketide could be catalyzed by ptaB containing a beta-lactamase domain. The ptaB protein might hydrolyze the thioester bond between the ACP of ptaA and the intermediate to release atrochrysone carboxylic acid, which is spontaneously dehydrated to form endocrocin anthrone. Endocrocin anthrone is then converted to endocrocin, catalyzed by the anthrone oxygenase ptaC. Spontaneous decarboxylation of endocrocin occurs to generate emodin. An O-methyltransferase (ptaH or ptaI) could methylate emodin to form physcion. PtaJ could then catalyze the oxidative cleavage of physcion, and rotation of the intermediate could then afford desmethylisosulochrin. PtaF, a putative NADH-dependent oxidoreductase, might also participate in the oxidative cleavage step. Desmethylisosulochrin is then transformed by another O-methyltransferase (ptaH or ptaI) to form isosulochrin. Chlorination of isosulochrin by ptaM in the cyclohexadienone B ring then produces chloroisosulochrin. PtaE is responsible for the oxidative coupling reactions of both benzophenones isosulouchrin and chloroisosulochrin to RES-1214-1 and pestheic acid respectively, regardless of chlorination. The protein is Oxidoreductase ptaE of Pestalotiopsis fici (strain W106-1 / CGMCC3.15140).